The following is a 250-amino-acid chain: MSKENKTTDFGFTQVPWEEKQKKVAGVFHSVAAKYDLMNDLMSFGIHRIWKKQTIAKSGVRKGDNVLDLAGGTGDLAYKFCQMVGQQGKVILSDINSSMLEVGKEKLTNKGCVGNIEYVQANAECLPFPDNYFDCITISFGLRNVTDKEKALASMCRVLKPGGRLLVLEFSKPIIPLLSKVYDEYSFKALPFLGKIITQDAESYKYLAESIRKHPDQQTLKQMMYDAGFDNVEYQNMTGGIVALHIGYKY.

S-adenosyl-L-methionine-binding positions include Thr73, Asp94, Asn122 to Ala123, and Ser139.

Belongs to the class I-like SAM-binding methyltransferase superfamily. MenG/UbiE family.

The enzyme catalyses a 2-demethylmenaquinol + S-adenosyl-L-methionine = a menaquinol + S-adenosyl-L-homocysteine + H(+). It catalyses the reaction a 2-methoxy-6-(all-trans-polyprenyl)benzene-1,4-diol + S-adenosyl-L-methionine = a 5-methoxy-2-methyl-3-(all-trans-polyprenyl)benzene-1,4-diol + S-adenosyl-L-homocysteine + H(+). It functions in the pathway quinol/quinone metabolism; menaquinone biosynthesis; menaquinol from 1,4-dihydroxy-2-naphthoate: step 2/2. The protein operates within cofactor biosynthesis; ubiquinone biosynthesis. In terms of biological role, methyltransferase required for the conversion of demethylmenaquinol (DMKH2) to menaquinol (MKH2) and the conversion of 2-polyprenyl-6-methoxy-1,4-benzoquinol (DDMQH2) to 2-polyprenyl-3-methyl-6-methoxy-1,4-benzoquinol (DMQH2). The sequence is that of Ubiquinone/menaquinone biosynthesis C-methyltransferase UbiE from Francisella tularensis subsp. novicida (strain U112).